The chain runs to 272 residues: NH(3)-dependent NAD(+) synthetase (272 aa).

Position 45–52 (glycine 45–serine 52) interacts with ATP. Mg(2+) is bound at residue aspartate 51. Residue arginine 138 participates in deamido-NAD(+) binding. ATP is bound at residue threonine 158. Glutamate 163 serves as a coordination point for Mg(2+). Residues lysine 171 and aspartate 178 each contribute to the deamido-NAD(+) site. Residues lysine 187 and threonine 209 each contribute to the ATP site. Histidine 258–lysine 259 lines the deamido-NAD(+) pocket.

This sequence belongs to the NAD synthetase family. Homodimer.

The catalysed reaction is deamido-NAD(+) + NH4(+) + ATP = AMP + diphosphate + NAD(+) + H(+). The protein operates within cofactor biosynthesis; NAD(+) biosynthesis; NAD(+) from deamido-NAD(+) (ammonia route): step 1/1. Functionally, catalyzes the ATP-dependent amidation of deamido-NAD to form NAD. Uses ammonia as a nitrogen source. The sequence is that of NH(3)-dependent NAD(+) synthetase from Bacillus cereus (strain ATCC 10987 / NRS 248).